The chain runs to 321 residues: Epiphycan (321 aa).

The first 19 residues, 1-19, serve as a signal peptide directing secretion; sequence MKALARLIVGLLILDAAVT. O-linked (GalNAc...) threonine glycosylation is present at Thr60. Residue Ser64 is glycosylated (O-linked (Xyl...) (dermatan sulfate) serine). The disordered stretch occupies residues 64-100; that stretch reads SGNRELLTPPPQPEEAEEEEEEESTPRLIDGSSPQEP. Acidic residues predominate over residues 77 to 86; it reads EEAEEEEEEE. The O-linked (GalNAc...) serine glycan is linked to Ser95. The LRRNT domain maps to 105 to 142; that stretch reads VLGPQTNEDFPTCLLCTCISTTVYCDDHELDAIPPLPK. Cys117 and Cys129 are oxidised to a cystine. LRR repeat units lie at residues 143–164, 167–188, 191–212, 237–257, and 258–279; these read NTAY…DFAS, DLRR…AFRK, QLRE…PTTL, DLHH…PLPE, and NLRA…TFCN. Residues Cys278 and Cys311 are joined by a disulfide bond. An N-linked (GlcNAc...) asparagine glycan is attached at Asn282. The stretch at 289-309 is one LRR 6 repeat; sequence ALEDIRLDGNPINLSKTPQAY.

Belongs to the small leucine-rich proteoglycan (SLRP) family. SLRP class III subfamily. Post-translationally, a long and a short form present in approximately equimolar amounts may arise by proteolysis or cleavage by exopeptidases. The O-linked polysaccharides on Thr-60 and Ser-95 are probably the mucin type linked to GalNAc. There is one glycosaminoglycan chain, known to be dermatan sulfate, and it is probably the O-glycosylation at Ser-64. In terms of tissue distribution, preferentially expressed in the zone of flattened chondrocytes of the developing limb cartilage.

It localises to the secreted. The protein resides in the extracellular space. Its subcellular location is the extracellular matrix. Its function is as follows. May have a role in bone formation and also in establishing the ordered structure of cartilage through matrix organization. The sequence is that of Epiphycan (EPYC) from Bos taurus (Bovine).